Consider the following 336-residue polypeptide: Ketol-acid reductoisomerase (NADP(+)) 1 (336 aa).

The region spanning 2 to 181 is the KARI N-terminal Rossmann domain; it reads AKVYYEKDVT…GATRAGVLET (180 aa). NADP(+)-binding positions include 25–28, Arg48, Ser52, and 82–85; these read YGSQ and DELQ. Residue His107 is part of the active site. Gly133 is an NADP(+) binding site. A KARI C-terminal knotted domain is found at 182–327; it reads TFKEETETDL…RKLREMMPFV (146 aa). 4 residues coordinate Mg(2+): Asp190, Glu194, Glu226, and Glu230. Ser251 is a binding site for substrate.

It belongs to the ketol-acid reductoisomerase family. It depends on Mg(2+) as a cofactor.

It carries out the reaction (2R)-2,3-dihydroxy-3-methylbutanoate + NADP(+) = (2S)-2-acetolactate + NADPH + H(+). The catalysed reaction is (2R,3R)-2,3-dihydroxy-3-methylpentanoate + NADP(+) = (S)-2-ethyl-2-hydroxy-3-oxobutanoate + NADPH + H(+). Its pathway is amino-acid biosynthesis; L-isoleucine biosynthesis; L-isoleucine from 2-oxobutanoate: step 2/4. The protein operates within amino-acid biosynthesis; L-valine biosynthesis; L-valine from pyruvate: step 2/4. In terms of biological role, involved in the biosynthesis of branched-chain amino acids (BCAA). Catalyzes an alkyl-migration followed by a ketol-acid reduction of (S)-2-acetolactate (S2AL) to yield (R)-2,3-dihydroxy-isovalerate. In the isomerase reaction, S2AL is rearranged via a Mg-dependent methyl migration to produce 3-hydroxy-3-methyl-2-ketobutyrate (HMKB). In the reductase reaction, this 2-ketoacid undergoes a metal-dependent reduction by NADPH to yield (R)-2,3-dihydroxy-isovalerate. The chain is Ketol-acid reductoisomerase (NADP(+)) 1 from Bacillus cereus (strain ATCC 10987 / NRS 248).